The chain runs to 965 residues: Glycine dehydrogenase (decarboxylating) 1 (965 aa).

The residue at position 713 (Lys-713) is an N6-(pyridoxal phosphate)lysine.

Belongs to the GcvP family. The glycine cleavage system is composed of four proteins: P, T, L and H. It depends on pyridoxal 5'-phosphate as a cofactor.

The catalysed reaction is N(6)-[(R)-lipoyl]-L-lysyl-[glycine-cleavage complex H protein] + glycine + H(+) = N(6)-[(R)-S(8)-aminomethyldihydrolipoyl]-L-lysyl-[glycine-cleavage complex H protein] + CO2. The glycine cleavage system catalyzes the degradation of glycine. The P protein binds the alpha-amino group of glycine through its pyridoxal phosphate cofactor; CO(2) is released and the remaining methylamine moiety is then transferred to the lipoamide cofactor of the H protein. In Colwellia psychrerythraea (strain 34H / ATCC BAA-681) (Vibrio psychroerythus), this protein is Glycine dehydrogenase (decarboxylating) 1.